The chain runs to 209 residues: Glycine cleavage system H-like protein gcvH4 (209 aa).

A compositionally biased stretch (low complexity) spans 35 to 51 (NNNNNNNNNNNNNNNNN). Positions 35 to 56 (NNNNNNNNNNNNNNNNNRNKKL) are disordered. The 87-residue stretch at 73–159 (FATIGITNYV…KTTTTTTKIK (87 aa)) folds into the Lipoyl-binding domain.

It belongs to the GcvH family.

The chain is Glycine cleavage system H-like protein gcvH4 (gcvH4) from Dictyostelium discoideum (Social amoeba).